A 703-amino-acid polypeptide reads, in one-letter code: Polyribonucleotide nucleotidyltransferase (703 aa).

Residues aspartate 489 and aspartate 495 each coordinate Mg(2+). The 60-residue stretch at proline 556–valine 615 folds into the KH domain. The 69-residue stretch at glycine 625–lysine 693 folds into the S1 motif domain.

The protein belongs to the polyribonucleotide nucleotidyltransferase family. Component of the RNA degradosome, which is a multiprotein complex involved in RNA processing and mRNA degradation. Requires Mg(2+) as cofactor.

Its subcellular location is the cytoplasm. The enzyme catalyses RNA(n+1) + phosphate = RNA(n) + a ribonucleoside 5'-diphosphate. Involved in mRNA degradation. Catalyzes the phosphorolysis of single-stranded polyribonucleotides processively in the 3'- to 5'-direction. The protein is Polyribonucleotide nucleotidyltransferase of Pseudomonas fluorescens (strain ATCC BAA-477 / NRRL B-23932 / Pf-5).